The sequence spans 92 residues: Acylphosphatase (92 aa).

The 88-residue stretch at 5–92 (CIAAYVYGVV…ADFQGFSIRY (88 aa)) folds into the Acylphosphatase-like domain. Catalysis depends on residues R20 and N38.

It belongs to the acylphosphatase family.

It catalyses the reaction an acyl phosphate + H2O = a carboxylate + phosphate + H(+). The chain is Acylphosphatase (acyP) from Serratia proteamaculans (strain 568).